We begin with the raw amino-acid sequence, 142 residues long: Cell division protein SepF (142 aa).

Belongs to the SepF family. Homodimer. Interacts with FtsZ.

Its subcellular location is the cytoplasm. Its function is as follows. Cell division protein that is part of the divisome complex and is recruited early to the Z-ring. Probably stimulates Z-ring formation, perhaps through the cross-linking of FtsZ protofilaments. Its function overlaps with FtsA. The sequence is that of Cell division protein SepF from Geobacillus kaustophilus (strain HTA426).